We begin with the raw amino-acid sequence, 613 residues long: Glutathione S-transferase C-terminal domain-containing protein (613 aa).

A GST C-terminal domain is found at 116-312 (LGFKKTCLKA…QQVPGVRFAA (197 aa)).

Belongs to the GSTCD family.

The protein localises to the cytoplasm. This chain is Glutathione S-transferase C-terminal domain-containing protein (gstcd), found in Xenopus laevis (African clawed frog).